Consider the following 811-residue polypeptide: Glycerol-3-phosphate acyltransferase (811 aa).

An HXXXXD motif motif is present at residues 303-308 (CHRSHM).

Belongs to the GPAT/DAPAT family.

The protein localises to the cell inner membrane. It catalyses the reaction sn-glycerol 3-phosphate + an acyl-CoA = a 1-acyl-sn-glycero-3-phosphate + CoA. Its pathway is phospholipid metabolism; CDP-diacylglycerol biosynthesis; CDP-diacylglycerol from sn-glycerol 3-phosphate: step 1/3. The protein is Glycerol-3-phosphate acyltransferase of Glaesserella parasuis serovar 5 (strain SH0165) (Haemophilus parasuis).